Consider the following 485-residue polypeptide: Serine/threonine-protein kinase 4 (485 aa).

One can recognise a Protein kinase domain in the interval 30–281; it reads FDVLEKLGEG…ATELLQHPFI (252 aa). Residues 36–44 and Lys59 contribute to the ATP site; that span reads LGEGSYGSV. The active-site Proton acceptor is the Asp149. A Phosphothreonine; by autocatalysis modification is found at Thr183. Residues 431 to 478 form the SARAH domain; it reads YSFLKDWSVAEVQLKLNSLDPMMEREIEEIHHKYQAKRQPILEAIESK.

This sequence belongs to the protein kinase superfamily. STE Ser/Thr protein kinase family. STE20 subfamily. Homodimer; mediated via the coiled-coil region. It depends on Mg(2+) as a cofactor. Autophosphorylated on Thr-183. Post-translationally, proteolytically cleaved by caspase-3 during apoptosis at Asp-326 resulting in a 37 kDa form. Proteolytic cleavage results in kinase activation and nuclear translocation of the truncated form (MST1/N).

It is found in the cytoplasm. The protein localises to the nucleus. It carries out the reaction L-seryl-[protein] + ATP = O-phospho-L-seryl-[protein] + ADP + H(+). The catalysed reaction is L-threonyl-[protein] + ATP = O-phospho-L-threonyl-[protein] + ADP + H(+). With respect to regulation, the C-terminal non-catalytic region inhibits the kinase activity, the enzyme is activated by caspase-cleavage. Homodimerization and autophosphorylation of Thr-183 is also required for full activation. Functionally, stress-activated, pro-apoptotic kinase which, following caspase-cleavage, enters the nucleus and induces chromatin condensation followed by internucleosomal DNA fragmentation. Key component of the Hippo signaling pathway which plays a pivotal role in organ size control and tumor suppression by restricting proliferation and promoting apoptosis. The core of this pathway is composed of a kinase cascade wherein stk3/mst2 and stk4/mst1, in complex with its regulatory protein sav1, phosphorylates and activates lats1/2 in complex with its regulatory protein mob1, which in turn phosphorylates and inactivates yap1 oncoprotein and wwtr1/taz. Phosphorylation of yap1 by lats2 inhibits its translocation into the nucleus to regulate cellular genes important for cell proliferation, cell death, and cell migration. Phosphorylates 'Ser-14' of histone H2B (H2BS14ph) during apoptosis. This Xenopus laevis (African clawed frog) protein is Serine/threonine-protein kinase 4 (stk4).